Consider the following 366-residue polypeptide: tRNA/tmRNA (uracil-C(5))-methyltransferase (366 aa).

S-adenosyl-L-methionine contacts are provided by Gln190, Tyr218, Asn223, Glu239, and Asp299. Cys324 serves as the catalytic Nucleophile. Glu358 functions as the Proton acceptor in the catalytic mechanism.

This sequence belongs to the class I-like SAM-binding methyltransferase superfamily. RNA M5U methyltransferase family. TrmA subfamily.

It carries out the reaction uridine(54) in tRNA + S-adenosyl-L-methionine = 5-methyluridine(54) in tRNA + S-adenosyl-L-homocysteine + H(+). The catalysed reaction is uridine(341) in tmRNA + S-adenosyl-L-methionine = 5-methyluridine(341) in tmRNA + S-adenosyl-L-homocysteine + H(+). In terms of biological role, dual-specificity methyltransferase that catalyzes the formation of 5-methyluridine at position 54 (m5U54) in all tRNAs, and that of position 341 (m5U341) in tmRNA (transfer-mRNA). This is tRNA/tmRNA (uracil-C(5))-methyltransferase from Escherichia coli (strain UTI89 / UPEC).